We begin with the raw amino-acid sequence, 149 residues long: Large ribosomal subunit protein bL9 (149 aa).

Belongs to the bacterial ribosomal protein bL9 family.

Its function is as follows. Binds to the 23S rRNA. This is Large ribosomal subunit protein bL9 from Thermotoga petrophila (strain ATCC BAA-488 / DSM 13995 / JCM 10881 / RKU-1).